A 103-amino-acid polypeptide reads, in one-letter code: Toluene-4-monooxygenase system, effector component (103 aa).

It belongs to the TmoD/XamoD family. The alkene monooxygenase multicomponent enzyme system is composed of an electron transfer component and a monooxygenase component interacting with the effector protein TmoD. The electron transfer component is composed of a ferredoxin reductase (TmoF) and a ferredoxin (TmoC), and the monooxygenase component is formed by a heterohexamer (dimer of heterotrimers) of two alpha subunits (TmoA), two beta subunits (TmoE) and two gamma subunits (TmoB).

Its pathway is xenobiotic degradation; toluene degradation. Functionally, effector component of the toluene-4-monooxygenase multicomponent enzyme system which catalyzes the O2- and NADH-dependent hydroxylation of toluene to form p-cresol. Required for optimal efficiency and specificity of the holoenzyme. The sequence is that of Toluene-4-monooxygenase system, effector component from Ectopseudomonas mendocina (Pseudomonas mendocina).